The sequence spans 82 residues: MALSKFQLVALLITYTLLFSCQSKIVKRMQVGPSECVYRGRCRDSYECRSRCGPPEFSHETLGLCMFDYDDYEYFCCCTTNY.

Residues 1-23 (MALSKFQLVALLITYTLLFSCQS) form the signal peptide. Disulfide bonds link Cys-36–Cys-78, Cys-42–Cys-65, Cys-48–Cys-76, and Cys-52–Cys-77.

Belongs to the DEFL family.

It localises to the secreted. The protein is Defensin-like protein 275 of Arabidopsis thaliana (Mouse-ear cress).